The primary structure comprises 468 residues: GDNF family receptor alpha-1 (468 aa).

Positions 1–24 (MFLATLYFALPLLDLLMSAEVSGG) are cleaved as a signal peptide. 3 tandem repeats follow at residues 25–113 (DRLD…LQGN), 150–238 (KGNN…YEER), and 239–342 (ERPN…KNAI). Cysteines 36 and 42 form a disulfide. N59 carries N-linked (GlcNAc...) asparagine glycosylation. Intrachain disulfides connect C154-C214, C161-C167, C178-C192, C187-C233, C216-C221, C243-C313, C250-C256, C267-C285, C277-C337, and C315-C325. 2 N-linked (GlcNAc...) asparagine glycosylation sites follow: N347 and N406. S430 carries the GPI-anchor amidated serine lipid modification. The propeptide at 431–468 (HITTKSMAAPPSCSLSSLPVLMLTALAALLSVSLAETS) is removed in mature form.

This sequence belongs to the GDNFR family. As to quaternary structure, interacts with GDNF ligand and RET: forms a 2:2:2 ternary complex composed of GDNF ligand, GFRA1 and RET receptor. Interacts with SORL1, either alone or in complex with GDNF. Interaction between SORL1 and GFRA1 leads to GFRA1 internalization, but not degradation. In terms of tissue distribution, expressed in liver, brain, kidney and cochlea.

It is found in the cell membrane. It localises to the golgi apparatus. Its subcellular location is the trans-Golgi network. The protein resides in the endosome. The protein localises to the multivesicular body. Functionally, coreceptor for GDNF, a neurotrophic factor that enhances survival and morphological differentiation of dopaminergic neurons and increases their high-affinity dopamine uptake. GDNF-binding leads to autophosphorylation and activation of the RET receptor. This Rattus norvegicus (Rat) protein is GDNF family receptor alpha-1 (Gfra1).